The following is a 131-amino-acid chain: Sec-independent protein translocase protein TatB (131 aa).

Residues 2-22 (FDGIGFMELLLIGVLGLVVLG) form a helical membrane-spanning segment. The segment at 69-131 (NQGLKNLAPE…ENAKSDKPNG (63 aa)) is disordered. Residues 105 to 123 (AKETPAKETATTETTSTEN) show a composition bias toward low complexity.

The protein belongs to the TatB family. In terms of assembly, the Tat system comprises two distinct complexes: a TatABC complex, containing multiple copies of TatA, TatB and TatC subunits, and a separate TatA complex, containing only TatA subunits. Substrates initially bind to the TatABC complex, which probably triggers association of the separate TatA complex to form the active translocon.

The protein resides in the cell inner membrane. Its function is as follows. Part of the twin-arginine translocation (Tat) system that transports large folded proteins containing a characteristic twin-arginine motif in their signal peptide across membranes. Together with TatC, TatB is part of a receptor directly interacting with Tat signal peptides. TatB may form an oligomeric binding site that transiently accommodates folded Tat precursor proteins before their translocation. The sequence is that of Sec-independent protein translocase protein TatB from Shewanella piezotolerans (strain WP3 / JCM 13877).